The following is a 140-amino-acid chain: Small ribosomal subunit protein uS12 (140 aa).

Aspartate 102 bears the 3-methylthioaspartic acid mark. The interval 121–140 (ANRQQSRSKYGAKKPKAAKK) is disordered. Residues 130 to 140 (YGAKKPKAAKK) are compositionally biased toward basic residues.

Belongs to the universal ribosomal protein uS12 family. In terms of assembly, part of the 30S ribosomal subunit. Contacts proteins S8 and S17. May interact with IF1 in the 30S initiation complex.

Its function is as follows. With S4 and S5 plays an important role in translational accuracy. In terms of biological role, interacts with and stabilizes bases of the 16S rRNA that are involved in tRNA selection in the A site and with the mRNA backbone. Located at the interface of the 30S and 50S subunits, it traverses the body of the 30S subunit contacting proteins on the other side and probably holding the rRNA structure together. The combined cluster of proteins S8, S12 and S17 appears to hold together the shoulder and platform of the 30S subunit. The sequence is that of Small ribosomal subunit protein uS12 from Alkaliphilus oremlandii (strain OhILAs) (Clostridium oremlandii (strain OhILAs)).